A 61-amino-acid polypeptide reads, in one-letter code: Probable tautomerase spyM18_1099 (61 aa).

Residue Pro-2 is the Proton acceptor; via imino nitrogen of the active site.

It belongs to the 4-oxalocrotonate tautomerase family.

This is Probable tautomerase spyM18_1099 from Streptococcus pyogenes serotype M18 (strain MGAS8232).